Consider the following 371-residue polypeptide: Probable cysteine protease RDL5 (371 aa).

Residues 1-23 form the signal peptide; the sequence is MGYAKSAMLIFLLALVIASCATA. A propeptide spans 24 to 143 (activation peptide); sequence MDMSVVSSND…NRYKTSDGDV (120 aa). N-linked (GlcNAc...) asparagine glycosylation is present at Asn94. Disulfide bonds link Cys165/Cys206, Cys199/Cys239, and Cys298/Cys349. Residue Cys168 is part of the active site. Residues His304 and Asn324 contribute to the active site.

Belongs to the peptidase C1 family. As to expression, expressed in roots, inflorescences and siliques.

Functionally, possesses protease activity in vitro. The protein is Probable cysteine protease RDL5 of Arabidopsis thaliana (Mouse-ear cress).